The primary structure comprises 136 residues: Selenoprotein M (136 aa).

Positions 1-19 (MWLPLPLLLGLLQLQPILS) are cleaved as a signal peptide. Residues cysteine 38 and selenocysteine 41 each act as nucleophile in the active site. The cysteinyl-selenocysteine (Cys-Sec) cross-link spans 38-41 (CGGU). A non-standard amino acid (selenocysteine) is located at residue selenocysteine 41. The disordered stretch occupies residues 111–136 (SSPDAPVPAEFKMAPARASGDTKEDL). The Prevents secretion from ER motif lies at 133–136 (KEDL).

The protein belongs to the selenoprotein M/F family.

It is found in the endoplasmic reticulum. In terms of biological role, may function as a thiol-disulfide oxidoreductase that participates in disulfide bond formation. This chain is Selenoprotein M (selenom), found in Xenopus laevis (African clawed frog).